The following is a 677-amino-acid chain: Methionine--tRNA ligase (677 aa).

Residues 14-24 (PYANGAIHLGH) carry the 'HIGH' region motif. Zn(2+) is bound by residues Cys-145, Cys-148, Cys-158, and Cys-161. Residues 330–334 (KMSKS) carry the 'KMSKS' region motif. Lys-333 contributes to the ATP binding site. Residues 576–677 (DFAKVDLRVA…EGALPGMRVM (102 aa)) enclose the tRNA-binding domain.

This sequence belongs to the class-I aminoacyl-tRNA synthetase family. MetG type 1 subfamily. As to quaternary structure, homodimer. Zn(2+) is required as a cofactor.

The protein resides in the cytoplasm. It catalyses the reaction tRNA(Met) + L-methionine + ATP = L-methionyl-tRNA(Met) + AMP + diphosphate. Is required not only for elongation of protein synthesis but also for the initiation of all mRNA translation through initiator tRNA(fMet) aminoacylation. In Saccharophagus degradans (strain 2-40 / ATCC 43961 / DSM 17024), this protein is Methionine--tRNA ligase.